We begin with the raw amino-acid sequence, 1371 residues long: DNA-directed RNA polymerase subunit beta (1371 aa).

Belongs to the RNA polymerase beta chain family. The RNAP catalytic core consists of 2 alpha, 1 beta, 1 beta' and 1 omega subunit. When a sigma factor is associated with the core the holoenzyme is formed, which can initiate transcription.

The enzyme catalyses RNA(n) + a ribonucleoside 5'-triphosphate = RNA(n+1) + diphosphate. Functionally, DNA-dependent RNA polymerase catalyzes the transcription of DNA into RNA using the four ribonucleoside triphosphates as substrates. In Geobacter sp. (strain M21), this protein is DNA-directed RNA polymerase subunit beta.